Reading from the N-terminus, the 435-residue chain is MQINNESKGIRINPMGRIQGEIEVPGDKSISHRAALFGGMAQGETHITNFLLGQDCLSTLACLKTLGVEWERRDAEVWIRGRGFENWHEPQDILDVGNSGTTMRLMLGVLAGCPFSATLTGDSSIRSRPMARVTLPLQEMGARILGRQEGKYAPLTIQGGLLQGIQFRSPVASAQVKSAILLAGLRAKGETMVTEPCLSRDHTERMLRGFGVDLKSEGRTAKVRGGAALSGQEVAVPGDISSAAFFLVLGTLIPQGELLIKNVGMNPTRTGILDALWQMGADIQVEEEREECGEPRANLRVRPAQLHGIEIQGEMIPKLIDEVPVLAVAASLAQGETVIRDAAELRVKETDRIQTVVQGLQALGANAQELPDGLRIQGAKSLRGGAAHSHGDHRLAMAWVVAGLLAEEGISLQGIEAAEVSFPNFLELIHEIAES.

3-phosphoshikimate is bound by residues lysine 28, serine 29, and arginine 33. Lysine 28 provides a ligand contact to phosphoenolpyruvate. The phosphoenolpyruvate site is built by glycine 100 and arginine 128. 4 residues coordinate 3-phosphoshikimate: serine 173, glutamine 175, aspartate 321, and lysine 348. Phosphoenolpyruvate is bound at residue glutamine 175. Residue aspartate 321 is the Proton acceptor of the active site. Phosphoenolpyruvate contacts are provided by arginine 352 and arginine 394.

This sequence belongs to the EPSP synthase family. In terms of assembly, monomer.

The protein resides in the cytoplasm. It catalyses the reaction 3-phosphoshikimate + phosphoenolpyruvate = 5-O-(1-carboxyvinyl)-3-phosphoshikimate + phosphate. It participates in metabolic intermediate biosynthesis; chorismate biosynthesis; chorismate from D-erythrose 4-phosphate and phosphoenolpyruvate: step 6/7. Catalyzes the transfer of the enolpyruvyl moiety of phosphoenolpyruvate (PEP) to the 5-hydroxyl of shikimate-3-phosphate (S3P) to produce enolpyruvyl shikimate-3-phosphate and inorganic phosphate. The polypeptide is 3-phosphoshikimate 1-carboxyvinyltransferase (Desulfitobacterium hafniense (strain DSM 10664 / DCB-2)).